The following is a 117-amino-acid chain: DNA-directed RNA polymerase subunit omega (117 aa).

This sequence belongs to the RNA polymerase subunit omega family. In terms of assembly, the RNAP catalytic core consists of 2 alpha, 1 beta, 1 beta' and 1 omega subunit. When a sigma factor is associated with the core the holoenzyme is formed, which can initiate transcription.

The enzyme catalyses RNA(n) + a ribonucleoside 5'-triphosphate = RNA(n+1) + diphosphate. Its function is as follows. Promotes RNA polymerase assembly. Latches the N- and C-terminal regions of the beta' subunit thereby facilitating its interaction with the beta and alpha subunits. The sequence is that of DNA-directed RNA polymerase subunit omega from Roseobacter denitrificans (strain ATCC 33942 / OCh 114) (Erythrobacter sp. (strain OCh 114)).